The chain runs to 275 residues: NH(3)-dependent NAD(+) synthetase (275 aa).

46-53 is a binding site for ATP; that stretch reads GISGGQDS. A Mg(2+)-binding site is contributed by Asp52. Arg140 lines the deamido-NAD(+) pocket. ATP is bound at residue Thr160. Glu165 is a binding site for Mg(2+). Positions 173 and 180 each coordinate deamido-NAD(+). 2 residues coordinate ATP: Lys189 and Thr211. Position 260–261 (260–261) interacts with deamido-NAD(+); the sequence is HK.

The protein belongs to the NAD synthetase family. As to quaternary structure, homodimer.

It catalyses the reaction deamido-NAD(+) + NH4(+) + ATP = AMP + diphosphate + NAD(+) + H(+). Its pathway is cofactor biosynthesis; NAD(+) biosynthesis; NAD(+) from deamido-NAD(+) (ammonia route): step 1/1. Its function is as follows. Catalyzes the ATP-dependent amidation of deamido-NAD to form NAD. Uses ammonia as a nitrogen source. This chain is NH(3)-dependent NAD(+) synthetase, found in Salmonella enteritidis PT4 (strain P125109).